Consider the following 533-residue polypeptide: MKKISLKTFRKSFNLSKSKDETEFMVVQPQSLAGDFVKDDSLFGSCYGKDMASCDIGSEDEKGKNRSKSESLMGTLKRRLSAKQKTKGKGGTASTDEDTFSSASAPGGLKDVRAPRPIRSTSLRSHHYSPTPWPLRPTSSEETCIKMEMRVKALVHAASPGPVNGVRKDLRELQPRELRDLQPEPRPESRCSPSSPGDLSLHLEEHVPVVIGLMSQDYLQYTVPLDDGMCPLEGPRSCCLDTSSPMEVSAVPLPGASGAFSEDDSHVDQDLVVGPEILVDSSVNNLLIGTTGVMLQSPRGGHDDAPPLSPLLPPMQNNPIQRNFSGLSGPDLHMAESVRCHLNFDPNSAPGVARVYDSVQSSGPMVVTSLTEELKKLAKQGWYWGPITRWEAEGKLANVPDGSFLVRDSSDDRYLLSLSFRSHGKTLHTRIEHSNGRFSFYEQPDVEGHTSIVDLIEHSIRDSENGAFCYSRSRLPGSATYPVRLTNPVSRFMQVRSLQYLCRFVIRQYTRIDLIQKLPLPNKMKDYLQEKHY.

2 disordered regions span residues 54–136 and 177–199; these read CDIG…WPLR and ELRDLQPEPRPESRCSPSSPGDL. Residues 59 to 69 show a composition bias toward basic and acidic residues; that stretch reads EDEKGKNRSKS. The segment covering 76–88 has biased composition (basic residues); it reads LKRRLSAKQKTKG. Over residues 177-189 the composition is skewed to basic and acidic residues; sequence ELRDLQPEPRPES. Residues 382–489 enclose the SH2 domain; that stretch reads WYWGPITRWE…TYPVRLTNPV (108 aa). Positions 484 to 533 constitute an SOCS box domain; that stretch reads RLTNPVSRFMQVRSLQYLCRFVIRQYTRIDLIQKLPLPNKMKDYLQEKHY.

As to quaternary structure, interacts with KIT (phosphorylated). Interacts with RBCK1. Interacts with phosphorylated IRS4. Interacts with PIM3.

Its pathway is protein modification; protein ubiquitination. Its function is as follows. SOCS family proteins form part of a classical negative feedback system that regulates cytokine signal transduction. May be a substrate recognition component of a SCF-like ECS (Elongin BC-CUL2/5-SOCS-box protein) E3 ubiquitin-protein ligase complex which mediates the ubiquitination and subsequent proteasomal degradation of target proteins. Regulates KIT degradation by ubiquitination of the tyrosine-phosphorylated receptor. This chain is Suppressor of cytokine signaling 6 (Socs6), found in Mus musculus (Mouse).